The primary structure comprises 426 residues: Probable inactive metalloprotease YmfF (426 aa).

2 residues coordinate Zn(2+): histidine 50 and glutamate 138.

Belongs to the peptidase M16 family.

In Bacillus subtilis (strain 168), this protein is Probable inactive metalloprotease YmfF (ymfF).